We begin with the raw amino-acid sequence, 735 residues long: Alpha-adducin (735 aa).

N-acetylmethionine is present on Met-1. The segment covering 1-11 has biased composition (low complexity); the sequence is MNGDTRAAVVT. The interval 1-21 is disordered; the sequence is MNGDTRAAVVTSPPPTTAPHK. Residues Ser-12, Ser-59, and Ser-64 each carry the phosphoserine modification. Residue Thr-331 is modified to Phosphothreonine. Phosphoserine is present on residues Ser-334, Ser-353, and Ser-355. Residue Thr-358 is modified to Phosphothreonine. Residues Ser-364, Ser-366, Ser-408, and Ser-427 each carry the phosphoserine modification. Disordered stretches follow at residues 418–487 and 576–735; these read GHSF…AVPN and RREV…KSDS. At Thr-429 the chain carries Phosphothreonine. A phosphoserine mark is found at Ser-431 and Ser-436. Positions 440 to 455 are enriched in basic and acidic residues; sequence QQREKTRWLHSGRGDD. Thr-445 carries the post-translational modification Phosphothreonine; by ROCK2. 2 positions are modified to phosphoserine: Ser-464 and Ser-465. Thr-480 bears the Phosphothreonine; by ROCK2 mark. At Ser-481 the chain carries Phosphoserine; by PKA. Basic and acidic residues predominate over residues 576–601; that stretch reads RREVERKQKGSEENLDETREQKEKSP. Phosphoserine is present on residues Ser-586, Ser-600, and Ser-605. A Phosphothreonine modification is found at Thr-610. Ser-613 bears the Phosphoserine mark. Residue Thr-614 is modified to Phosphothreonine. Residues 698–712 show a composition bias toward low complexity; that stretch reads GSPMDPGSDGSPGKS. A phosphoserine mark is found at Ser-705, Ser-708, and Ser-712. Residues 713-735 show a composition bias toward basic residues; the sequence is PSKKKKKFRTPSFLKKSKKKSDS. The residue at position 714 (Ser-714) is a Phosphoserine; by PKC. The tract at residues 715-732 is interaction with calmodulin; the sequence is KKKKKFRTPSFLKKSKKK. Ser-724 is subject to Phosphoserine; by PKA and PKC.

It belongs to the aldolase class II family. Adducin subfamily. Heterodimer of an alpha and a beta subunit or an alpha and a gamma subunit.

Its subcellular location is the cytoplasm. The protein localises to the cytoskeleton. The protein resides in the cell membrane. Its function is as follows. Membrane-cytoskeleton-associated protein that promotes the assembly of the spectrin-actin network. Binds to calmodulin. This is Alpha-adducin (Add1) from Mus musculus (Mouse).